The primary structure comprises 640 residues: Scarecrow-like protein 27 (640 aa).

Composition is skewed to low complexity over residues 68–79 (SYSSTTTTLSSS) and 86–98 (TVTN…GDDN). Residues 68 to 98 (SYSSTTTTLSSSHGGGGTTVTNTTVTAGDDN) form a disordered region. Residues 259–639 (GMAGDDQSVI…KELVTVSAWK (381 aa)) form the GRAS domain. A leucine repeat I (LRI) region spans residues 266–331 (SVIIEQLFNA…AEALLSLIHN (66 aa)). The segment at 350-422 (YRSFSETSPF…NRASSLKLTV (73 aa)) is VHIID. A VHIID motif is present at residues 383-387 (IHIID). The segment at 438 to 470 (FTEENLKTFAGEVKIPFEIELLSVELLLNPAYW) is leucine repeat II (LRII). Residues 480–565 (EAIAVNLPVN…RFWVQPSIEK (86 aa)) form a PFYRE region. Residues 568–639 (MKRHRWIERS…KELVTVSAWK (72 aa)) form an SAW region.

This sequence belongs to the GRAS family. Expressed in seedlings, roots, cotyledons, leaves and flowers.

Its subcellular location is the nucleus. In terms of biological role, probable transcription factor involved in plant development. This Arabidopsis thaliana (Mouse-ear cress) protein is Scarecrow-like protein 27 (SCL27).